The primary structure comprises 191 residues: Amelogenin, X isoform (191 aa).

Positions 1–16 are cleaved as a signal peptide; that stretch reads MGTWILFACLLGAAFA. Position 32 is a phosphoserine (Ser-32). Residues 95 to 117 are compositionally biased toward low complexity; that stretch reads IPQQPMMPVPGQHSMTPIQHHQP. The segment at 95-191 is disordered; that stretch reads IPQQPMMPVP…TDKTKREEVD (97 aa). Over residues 118-171 the composition is skewed to pro residues; the sequence is NLPPPAQQPYQPQPVQPQPHQPMQPQPPVHPMQPLPPQPPLPPMFPMQPLPPML.

It belongs to the amelogenin family. As to quaternary structure, interacts with KRT5. Phosphorylated by FAM20C in vitro.

Its subcellular location is the secreted. The protein resides in the extracellular space. The protein localises to the extracellular matrix. Plays a role in biomineralization. Seems to regulate the formation of crystallites during the secretory stage of tooth enamel development. Thought to play a major role in the structural organization and mineralization of developing enamel. This chain is Amelogenin, X isoform (AMELX), found in Homo sapiens (Human).